The following is a 182-amino-acid chain: ATP synthase subunit delta (182 aa).

This sequence belongs to the ATPase delta chain family. In terms of assembly, F-type ATPases have 2 components, F(1) - the catalytic core - and F(0) - the membrane proton channel. F(1) has five subunits: alpha(3), beta(3), gamma(1), delta(1), epsilon(1). CF(0) has four main subunits: a(1), b(1), b'(1) and c(10-14). The alpha and beta chains form an alternating ring which encloses part of the gamma chain. F(1) is attached to F(0) by a central stalk formed by the gamma and epsilon chains, while a peripheral stalk is formed by the delta, b and b' chains.

It localises to the cellular thylakoid membrane. Functionally, f(1)F(0) ATP synthase produces ATP from ADP in the presence of a proton or sodium gradient. F-type ATPases consist of two structural domains, F(1) containing the extramembraneous catalytic core and F(0) containing the membrane proton channel, linked together by a central stalk and a peripheral stalk. During catalysis, ATP synthesis in the catalytic domain of F(1) is coupled via a rotary mechanism of the central stalk subunits to proton translocation. Its function is as follows. This protein is part of the stalk that links CF(0) to CF(1). It either transmits conformational changes from CF(0) to CF(1) or is implicated in proton conduction. The chain is ATP synthase subunit delta from Prochlorococcus marinus (strain MIT 9211).